The chain runs to 662 residues: Chaperone protein dnaK1 (662 aa).

Phosphothreonine; by autocatalysis is present on Thr-198. Residues 630–662 form a disordered region; that stretch reads DWDDDPWAAPSGPPRGRSLNRRDRDPWDDDFYR. The span at 649-662 shows a compositional bias: basic and acidic residues; sequence NRRDRDPWDDDFYR.

Belongs to the heat shock protein 70 family.

Its function is as follows. Acts as a chaperone. The polypeptide is Chaperone protein dnaK1 (dnaK1) (Parasynechococcus marenigrum (strain WH8102)).